We begin with the raw amino-acid sequence, 261 residues long: Flap endonuclease Xni (261 aa).

Asp-105 provides a ligand contact to Mg(2+). Positions 164–256 (SQFLDLMALA…DFRVNSPTKA (93 aa)) constitute a 5'-3' exonuclease domain. Residues Leu-172, Ala-173, Pro-181, Ile-183, and Ile-186 each contribute to the K(+) site. The interval 185–190 (GIGPKS) is interaction with DNA.

This sequence belongs to the Xni family. Requires Mg(2+) as cofactor. The cofactor is K(+).

Has flap endonuclease activity. During DNA replication, flap endonucleases cleave the 5'-overhanging flap structure that is generated by displacement synthesis when DNA polymerase encounters the 5'-end of a downstream Okazaki fragment. This is Flap endonuclease Xni from Shewanella oneidensis (strain ATCC 700550 / JCM 31522 / CIP 106686 / LMG 19005 / NCIMB 14063 / MR-1).